The sequence spans 966 residues: Probable LIM domain-containing serine/threonine-protein kinase DDB_G0286997 (966 aa).

LIM zinc-binding domains lie at 3–62 and 63–120; these read SRCG…LNAP and KCFK…KPPP. Disordered stretches follow at residues 208–291 and 331–588; these read YSLS…PTED and PLNQ…EQQV. Residues 211-231 are compositionally biased toward low complexity; the sequence is SSPSSSSSSSSSSSSSSSSPP. Polar residues predominate over residues 232–269; that stretch reads NTFNKSSDFLRNPLNNNVKSSSSSIGGNFVNKSQQQQQ. Low complexity-rich tracts occupy residues 270-284 and 331-350; these read PIDS…ISPS and PLNQ…SPNL. Positions 374–389 are enriched in polar residues; that stretch reads TTTFSNPLLKTKNQSF. Over residues 419 to 430 the composition is skewed to pro residues; it reads PLPPPPITPIPS. Positions 431–449 are enriched in low complexity; the sequence is PSSSSIIINNQQQQQQESQ. Pro residues predominate over residues 490–511; that stretch reads KPIVLPPPPLDMEQLPLPPPPL. Positions 513–526 are enriched in polar residues; sequence SSQINQSLKSTQHN. Residues 543-560 show a composition bias toward low complexity; the sequence is IQKQSIPTRKPQLPQSSN. The segment covering 561-570 has biased composition (pro residues); the sequence is PSPPSPPSPQ. A Protein kinase domain is found at 702 to 959; sequence VIFGDVIAAG…DTLKKISESL (258 aa). ATP contacts are provided by residues 708–716 and lysine 729; that span reads IAAGASGKV. Aspartate 825 functions as the Proton acceptor in the catalytic mechanism.

The protein belongs to the protein kinase superfamily. TKL Ser/Thr protein kinase family.

It catalyses the reaction L-seryl-[protein] + ATP = O-phospho-L-seryl-[protein] + ADP + H(+). It carries out the reaction L-threonyl-[protein] + ATP = O-phospho-L-threonyl-[protein] + ADP + H(+). The polypeptide is Probable LIM domain-containing serine/threonine-protein kinase DDB_G0286997 (Dictyostelium discoideum (Social amoeba)).